A 366-amino-acid polypeptide reads, in one-letter code: Chorismate synthase (366 aa).

R48 and R54 together coordinate NADP(+). FMN contacts are provided by residues 125-127 (RSS), 238-239 (NA), G278, 293-297 (KPTSS), and R319.

The protein belongs to the chorismate synthase family. As to quaternary structure, homotetramer. The cofactor is FMNH2.

It catalyses the reaction 5-O-(1-carboxyvinyl)-3-phosphoshikimate = chorismate + phosphate. It functions in the pathway metabolic intermediate biosynthesis; chorismate biosynthesis; chorismate from D-erythrose 4-phosphate and phosphoenolpyruvate: step 7/7. Catalyzes the anti-1,4-elimination of the C-3 phosphate and the C-6 proR hydrogen from 5-enolpyruvylshikimate-3-phosphate (EPSP) to yield chorismate, which is the branch point compound that serves as the starting substrate for the three terminal pathways of aromatic amino acid biosynthesis. This reaction introduces a second double bond into the aromatic ring system. This chain is Chorismate synthase, found in Dechloromonas aromatica (strain RCB).